The chain runs to 492 residues: Rab5 GDP/GTP exchange factor (492 aa).

Positions 1–74 are interaction with ubiquitinated proteins; sequence MSLKSERRGI…EEEAFASSQS (74 aa). The A20-type zinc-finger motif lies at 13-47; the sequence is DQSELLCKKGCGYYGNPAWQGFCSKCWREEYHKAR. Zn(2+) contacts are provided by C19, C23, C35, and C38. The segment at 66-85 is disordered; the sequence is EEAFASSQSSQGAQSLTFSK. Over residues 69-84 the composition is skewed to low complexity; that stretch reads FASSQSSQGAQSLTFS. Residues S125 and S133 each carry the phosphoserine modification. K152 and K171 each carry N6-acetyllysine. A VPS9 domain is found at 233–376; sequence EKKDLAIQKR…IEKLDAQSLN (144 aa). A phosphoserine mark is found at S374, S378, S391, and S401. A coiled-coil region spans residues 408–449; it reads VKQMYKNLDLLSQLNERQERIMNEAKKLEKDLIDWTDGIAKE. The disordered stretch occupies residues 471 to 492; sequence IDSENVENDKLPPPLQPQVYAG.

In terms of assembly, heterodimer with RABEP1. The heterodimer binds RAB4A and RAB5A that have been activated by GTP-binding. Binds TSC2, GGA1, GGA2, GGA3, AP1G1 and AP1G2. Interacts with RAB21, and with 100-fold lower affinity also with RAB22. Interacts with ubiquitinated EGFR. Interacts with RGS14; the interaction is GTP-dependent. Monoubiquitinated. Detected in brain.

Its subcellular location is the cytoplasm. It localises to the early endosome. It is found in the recycling endosome. Functionally, rab effector protein acting as linker between gamma-adaptin and RAB5A. Involved in endocytic membrane fusion and membrane trafficking of recycling endosomes. Stimulates nucleotide exchange on RAB5A. Can act as a ubiquitin ligase. This Bos taurus (Bovine) protein is Rab5 GDP/GTP exchange factor (RABGEF1).